Reading from the N-terminus, the 256-residue chain is Probable S-methyl-5'-thioinosine phosphorylase (256 aa).

Residues Thr10 and 47–48 each bind phosphate; that span reads RH. Met178 contributes to the substrate binding site. Thr179 serves as a coordination point for phosphate. 202–204 is a substrate binding site; sequence NYA.

It belongs to the PNP/MTAP phosphorylase family. MTAP subfamily. As to quaternary structure, homotrimer.

It catalyses the reaction S-methyl-5'-thioinosine + phosphate = 5-(methylsulfanyl)-alpha-D-ribose 1-phosphate + hypoxanthine. The protein operates within purine metabolism; purine nucleoside salvage. Catalyzes the reversible phosphorylation of S-methyl-5'-thioinosine (MTI) to hypoxanthine and 5-methylthioribose-1-phosphate. Involved in the breakdown of S-methyl-5'-thioadenosine (MTA), a major by-product of polyamine biosynthesis. Catabolism of (MTA) occurs via deamination to MTI and phosphorolysis to hypoxanthine. In Methanopyrus kandleri (strain AV19 / DSM 6324 / JCM 9639 / NBRC 100938), this protein is Probable S-methyl-5'-thioinosine phosphorylase.